The following is a 173-amino-acid chain: MFDFLTSLQTYRQEAAQAAQYIGQGFGVTFDHMSRRPITIHYPYEKLIPSERFRGRIHFEFDKCIACEVCVRVCPINLPVVDWDYQKSVKKKQLRSYSIDFGVCIFCGNCVEYCPTNCLSMTEEYELSVYDRHELNFDHVALGRVPTSVVQDTLVTPVLGLGYLPKGELSSLP.

4Fe-4S ferredoxin-type domains are found at residues 55 to 84 and 95 to 124; these read GRIH…VDWD and RSYS…MTEE. [4Fe-4S] cluster-binding residues include Cys64, Cys67, Cys70, Cys74, Cys104, Cys107, Cys110, and Cys114.

It belongs to the complex I 23 kDa subunit family. As to quaternary structure, NDH is composed of at least 16 different subunits, 5 of which are encoded in the nucleus. Requires [4Fe-4S] cluster as cofactor.

The protein localises to the plastid. It localises to the chloroplast thylakoid membrane. The catalysed reaction is a plastoquinone + NADH + (n+1) H(+)(in) = a plastoquinol + NAD(+) + n H(+)(out). The enzyme catalyses a plastoquinone + NADPH + (n+1) H(+)(in) = a plastoquinol + NADP(+) + n H(+)(out). In terms of biological role, NDH shuttles electrons from NAD(P)H:plastoquinone, via FMN and iron-sulfur (Fe-S) centers, to quinones in the photosynthetic chain and possibly in a chloroplast respiratory chain. The immediate electron acceptor for the enzyme in this species is believed to be plastoquinone. Couples the redox reaction to proton translocation, and thus conserves the redox energy in a proton gradient. The sequence is that of NAD(P)H-quinone oxidoreductase subunit I, chloroplastic from Nephroselmis olivacea (Green alga).